Here is a 391-residue protein sequence, read N- to C-terminus: 3-ketoacyl-CoA thiolase (391 aa).

Cysteine 95 acts as the Acyl-thioester intermediate in catalysis. Active-site proton acceptor residues include histidine 347 and cysteine 377.

This sequence belongs to the thiolase-like superfamily. Thiolase family. As to quaternary structure, heterotetramer of two alpha chains (FadB) and two beta chains (FadA).

It is found in the cytoplasm. It catalyses the reaction an acyl-CoA + acetyl-CoA = a 3-oxoacyl-CoA + CoA. Its pathway is lipid metabolism; fatty acid beta-oxidation. Catalyzes the final step of fatty acid oxidation in which acetyl-CoA is released and the CoA ester of a fatty acid two carbons shorter is formed. The polypeptide is 3-ketoacyl-CoA thiolase (Ectopseudomonas oleovorans (Pseudomonas oleovorans)).